A 124-amino-acid polypeptide reads, in one-letter code: Fluoride-specific ion channel FluC (124 aa).

4 consecutive transmembrane segments (helical) span residues 4–24 (VLYI…ISIL), 35–55 (FGTL…YALA), 60–80 (IGPE…TTFS), and 100–120 (LNVL…QQLI). 2 residues coordinate Na(+): G74 and T77.

This sequence belongs to the fluoride channel Fluc/FEX (TC 1.A.43) family.

It localises to the cell inner membrane. It catalyses the reaction fluoride(in) = fluoride(out). Its activity is regulated as follows. Na(+) is not transported, but it plays an essential structural role and its presence is essential for fluoride channel function. Functionally, fluoride-specific ion channel. Important for reducing fluoride concentration in the cell, thus reducing its toxicity. This Shewanella amazonensis (strain ATCC BAA-1098 / SB2B) protein is Fluoride-specific ion channel FluC.